A 288-amino-acid chain; its full sequence is uncharacterized protein (288 aa).

The protein to M.bovis Mb1522c, M.leprae ML1804 and M.avium MAV321.

This is an uncharacterized protein from Mycobacterium tuberculosis (strain CDC 1551 / Oshkosh).